The chain runs to 204 residues: Urease accessory protein UreG (204 aa).

10–17 contributes to the GTP binding site; that stretch reads GPVGAGKT.

It belongs to the SIMIBI class G3E GTPase family. UreG subfamily. As to quaternary structure, homodimer. UreD, UreF and UreG form a complex that acts as a GTP-hydrolysis-dependent molecular chaperone, activating the urease apoprotein by helping to assemble the nickel containing metallocenter of UreC. The UreE protein probably delivers the nickel.

The protein resides in the cytoplasm. Facilitates the functional incorporation of the urease nickel metallocenter. This process requires GTP hydrolysis, probably effectuated by UreG. The polypeptide is Urease accessory protein UreG (Bacillus sp. (strain TB-90)).